Here is a 310-residue protein sequence, read N- to C-terminus: MKITVIGAGNVGATAALKIAEKQFANEVVLIDVVEGIPQGKALDMYESGAVSLFDTRVIGSNDYKDSADSDIILITAGLARKPGMTREDLLMKNAAIIKEVTSQVMKYSTNPIIVMVSNPVDIMTYVAHRVSGLPKERVIGMGGVLDTARYKNFIAETLNISMQDISALVLGGHGDAMVPVVNYTNVAGIPLTELLPLDIIDGLVERTRNGGIEIVNYLKSGSAYYAPAASTVEMIEAIARDRKRILPCTTLLDGQYGINSVFCGVPVKLGKNGIEQVLEINLSAPERSALQRSADIVEKNCKMLESLFA.

Residues 7-12 (GAGNVG) and aspartate 32 contribute to the NAD(+) site. Residues arginine 81 and arginine 87 each coordinate substrate. Residues asparagine 94 and 117-119 (VSN) each bind NAD(+). Substrate-binding residues include asparagine 119 and arginine 150. Residue histidine 174 is the Proton acceptor of the active site.

This sequence belongs to the LDH/MDH superfamily. MDH type 3 family.

The enzyme catalyses (S)-malate + NAD(+) = oxaloacetate + NADH + H(+). Functionally, catalyzes the reversible oxidation of malate to oxaloacetate. The chain is Malate dehydrogenase from Chlorobium chlorochromatii (strain CaD3).